A 155-amino-acid polypeptide reads, in one-letter code: NADPH-dependent 7-cyano-7-deazaguanine reductase (155 aa).

The Thioimide intermediate role is filled by C53. Residue D60 is the Proton donor of the active site. Residues 75–77 (VES) and 94–95 (HE) contribute to the substrate site.

The protein belongs to the GTP cyclohydrolase I family. QueF type 1 subfamily.

The protein localises to the cytoplasm. The catalysed reaction is 7-aminomethyl-7-carbaguanine + 2 NADP(+) = 7-cyano-7-deazaguanine + 2 NADPH + 3 H(+). Its pathway is tRNA modification; tRNA-queuosine biosynthesis. Catalyzes the NADPH-dependent reduction of 7-cyano-7-deazaguanine (preQ0) to 7-aminomethyl-7-deazaguanine (preQ1). In Brucella abortus (strain S19), this protein is NADPH-dependent 7-cyano-7-deazaguanine reductase.